Reading from the N-terminus, the 389-residue chain is S-adenosylmethionine synthase (389 aa).

Residue His-17 coordinates ATP. Asp-19 provides a ligand contact to Mg(2+). Glu-45 is a K(+) binding site. L-methionine contacts are provided by Glu-58 and Gln-101. Residues 101–111 are flexible loop; it reads QSPDIAQGVNP. Residues 168-170, 234-235, Asp-243, 249-250, and Lys-270 each bind ATP; these read DGK, RF, and RK. Residue Asp-243 participates in L-methionine binding. Lys-274 contributes to the L-methionine binding site.

This sequence belongs to the AdoMet synthase family. In terms of assembly, homotetramer; dimer of dimers. It depends on Mg(2+) as a cofactor. The cofactor is K(+).

The protein resides in the cytoplasm. The catalysed reaction is L-methionine + ATP + H2O = S-adenosyl-L-methionine + phosphate + diphosphate. Its pathway is amino-acid biosynthesis; S-adenosyl-L-methionine biosynthesis; S-adenosyl-L-methionine from L-methionine: step 1/1. Catalyzes the formation of S-adenosylmethionine (AdoMet) from methionine and ATP. The overall synthetic reaction is composed of two sequential steps, AdoMet formation and the subsequent tripolyphosphate hydrolysis which occurs prior to release of AdoMet from the enzyme. The protein is S-adenosylmethionine synthase of Syntrophobacter fumaroxidans (strain DSM 10017 / MPOB).